The following is a 363-amino-acid chain: Phosphoserine aminotransferase (363 aa).

Arginine 42 serves as a coordination point for L-glutamate. Pyridoxal 5'-phosphate is bound by residues 76-77, tryptophan 102, threonine 156, aspartate 175, and glutamine 198; that span reads GR. Lysine 199 is modified (N6-(pyridoxal phosphate)lysine). 240 to 241 contributes to the pyridoxal 5'-phosphate binding site; the sequence is NT.

Belongs to the class-V pyridoxal-phosphate-dependent aminotransferase family. SerC subfamily. As to quaternary structure, homodimer. Requires pyridoxal 5'-phosphate as cofactor.

It is found in the cytoplasm. It carries out the reaction O-phospho-L-serine + 2-oxoglutarate = 3-phosphooxypyruvate + L-glutamate. It catalyses the reaction 4-(phosphooxy)-L-threonine + 2-oxoglutarate = (R)-3-hydroxy-2-oxo-4-phosphooxybutanoate + L-glutamate. The protein operates within amino-acid biosynthesis; L-serine biosynthesis; L-serine from 3-phospho-D-glycerate: step 2/3. It participates in cofactor biosynthesis; pyridoxine 5'-phosphate biosynthesis; pyridoxine 5'-phosphate from D-erythrose 4-phosphate: step 3/5. Its function is as follows. Catalyzes the reversible conversion of 3-phosphohydroxypyruvate to phosphoserine and of 3-hydroxy-2-oxo-4-phosphonooxybutanoate to phosphohydroxythreonine. This Shewanella baltica (strain OS223) protein is Phosphoserine aminotransferase.